We begin with the raw amino-acid sequence, 125 residues long: Ribosome-binding factor A (125 aa).

Belongs to the RbfA family. Monomer. Binds 30S ribosomal subunits, but not 50S ribosomal subunits or 70S ribosomes.

It is found in the cytoplasm. Its function is as follows. One of several proteins that assist in the late maturation steps of the functional core of the 30S ribosomal subunit. Associates with free 30S ribosomal subunits (but not with 30S subunits that are part of 70S ribosomes or polysomes). Required for efficient processing of 16S rRNA. May interact with the 5'-terminal helix region of 16S rRNA. The chain is Ribosome-binding factor A from Carboxydothermus hydrogenoformans (strain ATCC BAA-161 / DSM 6008 / Z-2901).